The chain runs to 215 residues: 3-isopropylmalate dehydratase small subunit (215 aa).

Belongs to the LeuD family. LeuD type 1 subfamily. Heterodimer of LeuC and LeuD.

The enzyme catalyses (2R,3S)-3-isopropylmalate = (2S)-2-isopropylmalate. It functions in the pathway amino-acid biosynthesis; L-leucine biosynthesis; L-leucine from 3-methyl-2-oxobutanoate: step 2/4. Catalyzes the isomerization between 2-isopropylmalate and 3-isopropylmalate, via the formation of 2-isopropylmaleate. The chain is 3-isopropylmalate dehydratase small subunit from Xylella fastidiosa (strain 9a5c).